The following is a 429-amino-acid chain: uncharacterized protein (429 aa).

Residues S116, D179, and H206 each act as charge relay system in the active site.

This sequence belongs to the AB hydrolase 3 family.

Its subcellular location is the cytoplasm. The protein localises to the nucleus. This is an uncharacterized protein from Schizosaccharomyces pombe (strain 972 / ATCC 24843) (Fission yeast).